The sequence spans 532 residues: E3 ubiquitin-protein ligase ICP0 (532 aa).

Zn(2+)-binding residues include Cys-8, Cys-11, Cys-24, His-26, Cys-29, Cys-32, Cys-43, and Cys-46. The RING-type zinc-finger motif lies at 8–47; sequence CPICLEDPSNYSMALPCLHAFCYVCITRWIRQNPTCPLCK. Disordered stretches follow at residues 206 to 391, 406 to 426, 461 to 498, and 510 to 532; these read EYID…PMRP, APRDSSTSEAAGPSRLGAGPR, EDESARRRGNVLLRPRRQSVPPVPYPDIASTSPLIRQG, and QTQPAEPEEMRCPHNCQRYRRNQ. Acidic residues-rich tracts occupy residues 217–227 and 234–243; these read SEEETDSDIEV and DPEDTSDETS. Basic residues predominate over residues 286 to 295; it reads RSARLRRRQP.

Post-translationally, auto-ubiquitinated.

The catalysed reaction is S-ubiquitinyl-[E2 ubiquitin-conjugating enzyme]-L-cysteine + [acceptor protein]-L-lysine = [E2 ubiquitin-conjugating enzyme]-L-cysteine + N(6)-ubiquitinyl-[acceptor protein]-L-lysine.. Its function is as follows. Evades nuclear antiviral defenses triggered by dsDNA viruses. Acts during the initial stages of lytic infection and the reactivation of latent viral genome. Prevents the antiviral effect of nuclear bodies by degrading host PML and SP100. The chain is E3 ubiquitin-protein ligase ICP0 (63) from Equus caballus (Horse).